Consider the following 141-residue polypeptide: Hemoglobin subunit alpha (141 aa).

The region spanning valine 1–arginine 141 is the Globin domain. Serine 3 is subject to Phosphoserine. Residues lysine 7 and lysine 11 each carry the N6-succinyllysine modification. Lysine 16 carries the N6-acetyllysine; alternate modification. Lysine 16 carries the N6-succinyllysine; alternate modification. Tyrosine 24 carries the post-translational modification Phosphotyrosine. At serine 35 the chain carries Phosphoserine. The residue at position 40 (lysine 40) is an N6-succinyllysine. Serine 49 is subject to Phosphoserine. Histidine 58 is an O2 binding site. Histidine 87 is a heme b binding site. Serine 102 bears the Phosphoserine mark. Threonine 108 is subject to Phosphothreonine. A phosphoserine mark is found at serine 124 and serine 131. 2 positions are modified to phosphothreonine: threonine 134 and threonine 137. At serine 138 the chain carries Phosphoserine.

The protein belongs to the globin family. As to quaternary structure, heterotetramer of two alpha chains and two beta chains. Red blood cells.

Functionally, involved in oxygen transport from the lung to the various peripheral tissues. This Peromyscus crinitus (Canyon mouse) protein is Hemoglobin subunit alpha.